Reading from the N-terminus, the 128-residue chain is UPF0292 protein MJ1624 (128 aa).

Positions 23–105 (EKPIIVEGKR…KVNTKIRHEI (83 aa)) constitute a Toprim domain. Residues Glu29, Asp74, and Asp76 each coordinate Mg(2+).

This sequence belongs to the UPF0292 family. The cofactor is Mg(2+).

The chain is UPF0292 protein MJ1624 from Methanocaldococcus jannaschii (strain ATCC 43067 / DSM 2661 / JAL-1 / JCM 10045 / NBRC 100440) (Methanococcus jannaschii).